The sequence spans 127 residues: Large ribosomal subunit protein bL17 (127 aa).

It belongs to the bacterial ribosomal protein bL17 family. In terms of assembly, part of the 50S ribosomal subunit. Contacts protein L32.

This Aeromonas hydrophila subsp. hydrophila (strain ATCC 7966 / DSM 30187 / BCRC 13018 / CCUG 14551 / JCM 1027 / KCTC 2358 / NCIMB 9240 / NCTC 8049) protein is Large ribosomal subunit protein bL17.